The chain runs to 303 residues: 1D-myo-inositol 2-acetamido-2-deoxy-alpha-D-glucopyranoside deacetylase (303 aa).

Zn(2+)-binding residues include histidine 13, aspartate 16, and histidine 147.

It belongs to the MshB deacetylase family. Zn(2+) is required as a cofactor.

The catalysed reaction is 1D-myo-inositol 2-acetamido-2-deoxy-alpha-D-glucopyranoside + H2O = 1D-myo-inositol 2-amino-2-deoxy-alpha-D-glucopyranoside + acetate. Functionally, catalyzes the deacetylation of 1D-myo-inositol 2-acetamido-2-deoxy-alpha-D-glucopyranoside (GlcNAc-Ins) in the mycothiol biosynthesis pathway. In Mycobacterium tuberculosis (strain ATCC 25177 / H37Ra), this protein is 1D-myo-inositol 2-acetamido-2-deoxy-alpha-D-glucopyranoside deacetylase.